The following is a 209-amino-acid chain: Abscisic acid receptor PYL5 (209 aa).

Residues 44 to 196 (HAPGEHQCSS…NLTSLAEVSE (153 aa)) form an START-like region. Cysteines 51 and 177 form a disulfide. Residues K80, 109-114 (ATTSTE), 136-142 (RLRNYSS), and E161 contribute to the abscisate site. The short motif at 105–109 (TGLPA) is the Gate loop element. A Latch loop motif is present at residues 135 to 137 (HRL).

Belongs to the PYR/PYL/RCAR abscisic acid intracellular receptor family. As to quaternary structure, monomer. Interacts with PP2C30. Binding to PP2C30 is dependent on the presence of abscisic acid (ABA). Interacts with PP2C51. Binding to PP2C51 is dependent on the presence of ABA. Interacts with PP2C50. Binding to PP2C50 is dependent on the presence of ABA. Interacts with PP2C53. Expressed in leaf sheaths and leaf blades. Expressed at low levels in roots, flowers and seeds.

The protein localises to the nucleus. It is found in the cytoplasm. The protein resides in the cytosol. Functionally, intracellular abscisic acid (ABA) receptor that functions as a positive regulator of ABA signaling pathway. Together with ABI5, PP2C30 and SAPK2, is part of an ABA signaling unit that modulates seed germination and early seedling growth. Acts as a positive regulator of abiotic stress-responsive gene expression. Inhibits the protein phosphatases PP2C06 and PP2C09 when activated by ABA. This is Abscisic acid receptor PYL5 from Oryza sativa subsp. japonica (Rice).